A 138-amino-acid polypeptide reads, in one-letter code: Acidic phospholipase A2 Cvv-E6b (138 aa).

A signal peptide spans 1–16 (MRTLWILAVLLLGVEG). 7 cysteine pairs are disulfide-bonded: Cys-42–Cys-131, Cys-44–Cys-60, Cys-59–Cys-111, Cys-65–Cys-138, Cys-66–Cys-104, Cys-73–Cys-97, and Cys-91–Cys-102. 3 residues coordinate Ca(2+): Tyr-43, Gly-45, and Gly-47. The active site involves His-63. Residue Asp-64 coordinates Ca(2+). Asp-105 is a catalytic residue.

Requires Ca(2+) as cofactor. In terms of tissue distribution, expressed by the venom gland.

It localises to the secreted. It catalyses the reaction a 1,2-diacyl-sn-glycero-3-phosphocholine + H2O = a 1-acyl-sn-glycero-3-phosphocholine + a fatty acid + H(+). Its function is as follows. Snake venom phospholipase A2 (PLA2) that shows very low inhibition of ADP-induced platelet aggregation in platelet-rich plasma of human, rabbit and guinea pig. PLA2 catalyzes the calcium-dependent hydrolysis of the 2-acyl groups in 3-sn-phosphoglycerides. This chain is Acidic phospholipase A2 Cvv-E6b, found in Crotalus viridis viridis (Prairie rattlesnake).